A 90-amino-acid chain; its full sequence is Bombyxin B-12 (90 aa).

A signal peptide spans 1–20 (MMKTTIMFMLVVVISLTYSS). Cystine bridges form between cysteine 30/cysteine 76, cysteine 42/cysteine 89, and cysteine 75/cysteine 80. Positions 49-67 (SGAQYAPYFWTRQYLGSRG) are cleaved as a propeptide — c peptide like.

It belongs to the insulin family. In terms of assembly, heterodimer of a B chain and an A chain linked by two disulfide bonds.

Its subcellular location is the secreted. In terms of biological role, brain peptide responsible for activation of prothoracic glands to produce ecdysone in insects. The protein is Bombyxin B-12 (BBXB12) of Bombyx mori (Silk moth).